Consider the following 147-residue polypeptide: UPF0735 ACT domain-containing protein YszB (147 aa).

The region spanning 70-145 (TLFFHLEDRS…FVEKVEILGS (76 aa)) is the ACT domain.

It belongs to the UPF0735 family.

This is UPF0735 ACT domain-containing protein YszB (yszB) from Bacillus subtilis (strain 168).